We begin with the raw amino-acid sequence, 209 residues long: N-(5'-phosphoribosyl)anthranilate isomerase (209 aa).

This sequence belongs to the TrpF family.

The enzyme catalyses N-(5-phospho-beta-D-ribosyl)anthranilate = 1-(2-carboxyphenylamino)-1-deoxy-D-ribulose 5-phosphate. Its pathway is amino-acid biosynthesis; L-tryptophan biosynthesis; L-tryptophan from chorismate: step 3/5. The polypeptide is N-(5'-phosphoribosyl)anthranilate isomerase (Staphylococcus carnosus (strain TM300)).